Reading from the N-terminus, the 356-residue chain is Protein MGF 360-3L (356 aa).

An ANK repeat occupies K61–L93.

The protein belongs to the asfivirus MGF 360 family.

Plays a role in virus cell tropism, and may be required for efficient virus replication in macrophages. In African swine fever virus (isolate Warthog/Namibia/Wart80/1980) (ASFV), this protein is Protein MGF 360-3L.